The chain runs to 157 residues: Protein Smg homolog (157 aa).

The protein belongs to the Smg family.

The polypeptide is Protein Smg homolog (Shewanella putrefaciens (strain CN-32 / ATCC BAA-453)).